We begin with the raw amino-acid sequence, 446 residues long: tRNA-2-methylthio-N(6)-dimethylallyladenosine synthase (446 aa).

In terms of domain architecture, MTTase N-terminal spans 2–122 (KKAYVKSYGC…LPDLLRQSRE (121 aa)). 6 residues coordinate [4Fe-4S] cluster: cysteine 11, cysteine 47, cysteine 85, cysteine 157, cysteine 161, and cysteine 164. Residues 143 to 375 (RNRGVTGFLT…QDLLDRQRHA (233 aa)) form the Radical SAM core domain. The TRAM domain occupies 378-440 (AASVGTLTEI…SNSLFGEALE (63 aa)).

It belongs to the methylthiotransferase family. MiaB subfamily. As to quaternary structure, monomer. Requires [4Fe-4S] cluster as cofactor.

The protein resides in the cytoplasm. It catalyses the reaction N(6)-dimethylallyladenosine(37) in tRNA + (sulfur carrier)-SH + AH2 + 2 S-adenosyl-L-methionine = 2-methylsulfanyl-N(6)-dimethylallyladenosine(37) in tRNA + (sulfur carrier)-H + 5'-deoxyadenosine + L-methionine + A + S-adenosyl-L-homocysteine + 2 H(+). Its function is as follows. Catalyzes the methylthiolation of N6-(dimethylallyl)adenosine (i(6)A), leading to the formation of 2-methylthio-N6-(dimethylallyl)adenosine (ms(2)i(6)A) at position 37 in tRNAs that read codons beginning with uridine. This chain is tRNA-2-methylthio-N(6)-dimethylallyladenosine synthase, found in Methylorubrum extorquens (strain CM4 / NCIMB 13688) (Methylobacterium extorquens).